Consider the following 490-residue polypeptide: Cytochrome P450 71B28 (490 aa).

A helical membrane pass occupies residues 1-21 (MSVFLCFLCLLPLILIFLKNL). Cys-440 contacts heme.

It belongs to the cytochrome P450 family. It depends on heme as a cofactor.

The protein localises to the membrane. The polypeptide is Cytochrome P450 71B28 (CYP71B28) (Arabidopsis thaliana (Mouse-ear cress)).